Consider the following 86-residue polypeptide: Cell division protein ZapA (86 aa).

The protein belongs to the ZapA family. Type 2 subfamily. In terms of assembly, homodimer. Interacts with FtsZ.

The protein resides in the cytoplasm. In terms of biological role, activator of cell division through the inhibition of FtsZ GTPase activity, therefore promoting FtsZ assembly into bundles of protofilaments necessary for the formation of the division Z ring. It is recruited early at mid-cell but it is not essential for cell division. In Oceanobacillus iheyensis (strain DSM 14371 / CIP 107618 / JCM 11309 / KCTC 3954 / HTE831), this protein is Cell division protein ZapA.